The sequence spans 432 residues: Selenocysteine lyase (432 aa).

Position 1 is an N-acetylmethionine (Met1). The disordered stretch occupies residues 1 to 20 (MDVARNGARGSVESPPNRKV). Position 117 is a phosphoserine (Ser117). Lys247 is modified (N6-(pyridoxal phosphate)lysine). Cys375 functions as the S-selanylcysteine intermediate in the catalytic mechanism.

This sequence belongs to the class-V pyridoxal-phosphate-dependent aminotransferase family. As to quaternary structure, homodimer. Pyridoxal 5'-phosphate is required as a cofactor.

The protein localises to the cytoplasm. It is found in the cytosol. The catalysed reaction is L-selenocysteine + AH2 = hydrogenselenide + L-alanine + A + H(+). Functionally, catalyzes the decomposition of L-selenocysteine to L-alanine and elemental selenium. The protein is Selenocysteine lyase (Scly) of Rattus norvegicus (Rat).